Consider the following 122-residue polypeptide: ATP synthase epsilon chain (122 aa).

Belongs to the ATPase epsilon chain family. As to quaternary structure, F-type ATPases have 2 components, CF(1) - the catalytic core - and CF(0) - the membrane proton channel. CF(1) has five subunits: alpha(3), beta(3), gamma(1), delta(1), epsilon(1). CF(0) has three main subunits: a, b and c.

The protein resides in the cell membrane. In terms of biological role, produces ATP from ADP in the presence of a proton gradient across the membrane. The protein is ATP synthase epsilon chain of Rhodococcus erythropolis (strain PR4 / NBRC 100887).